The sequence spans 444 residues: Trigger factor (444 aa).

A PPIase FKBP-type domain is found at 166 to 251 (GDQVVIDFKG…VKAVKAPKAA (86 aa)).

The protein belongs to the FKBP-type PPIase family. Tig subfamily.

The protein localises to the cytoplasm. It catalyses the reaction [protein]-peptidylproline (omega=180) = [protein]-peptidylproline (omega=0). Functionally, involved in protein export. Acts as a chaperone by maintaining the newly synthesized protein in an open conformation. Functions as a peptidyl-prolyl cis-trans isomerase. In Cereibacter sphaeroides (strain ATCC 17029 / ATH 2.4.9) (Rhodobacter sphaeroides), this protein is Trigger factor.